We begin with the raw amino-acid sequence, 71 residues long: Defensin-like protein 124 (71 aa).

Residues 1 to 25 (MSKPTVIVIFMAILVLGMATKETQG) form the signal peptide. 4 disulfide bridges follow: cysteine 28–cysteine 71, cysteine 40–cysteine 60, cysteine 45–cysteine 65, and cysteine 49–cysteine 67.

This sequence belongs to the DEFL family.

Its subcellular location is the secreted. The sequence is that of Defensin-like protein 124 (LCR16) from Arabidopsis thaliana (Mouse-ear cress).